Here is a 78-residue protein sequence, read N- to C-terminus: DNA-directed RNA polymerase subunit omega (78 aa).

Belongs to the RNA polymerase subunit omega family. In terms of assembly, in cyanobacteria the RNAP catalytic core is composed of 2 alpha, 1 beta, 1 beta', 1 gamma and 1 omega subunit. When a sigma factor is associated with the core the holoenzyme is formed, which can initiate transcription.

The enzyme catalyses RNA(n) + a ribonucleoside 5'-triphosphate = RNA(n+1) + diphosphate. Its function is as follows. Promotes RNA polymerase assembly. Latches the N- and C-terminal regions of the beta' subunit thereby facilitating its interaction with the beta and alpha subunits. This Nostoc punctiforme (strain ATCC 29133 / PCC 73102) protein is DNA-directed RNA polymerase subunit omega.